The sequence spans 72 residues: Translation initiation factor IF-1 (72 aa).

The 72-residue stretch at 1–72 folds into the S1-like domain; it reads MAKEDTLEFP…TKGRINYRFK (72 aa).

The protein belongs to the IF-1 family. As to quaternary structure, component of the 30S ribosomal translation pre-initiation complex which assembles on the 30S ribosome in the order IF-2 and IF-3, IF-1 and N-formylmethionyl-tRNA(fMet); mRNA recruitment can occur at any time during PIC assembly.

It localises to the cytoplasm. One of the essential components for the initiation of protein synthesis. Stabilizes the binding of IF-2 and IF-3 on the 30S subunit to which N-formylmethionyl-tRNA(fMet) subsequently binds. Helps modulate mRNA selection, yielding the 30S pre-initiation complex (PIC). Upon addition of the 50S ribosomal subunit IF-1, IF-2 and IF-3 are released leaving the mature 70S translation initiation complex. In Roseobacter denitrificans (strain ATCC 33942 / OCh 114) (Erythrobacter sp. (strain OCh 114)), this protein is Translation initiation factor IF-1.